The primary structure comprises 138 residues: PTS system sorbose-specific EIIA component (138 aa).

Residues 1-125 enclose the PTS EIIA type-4 domain; the sequence is MEIILVGHAH…KIKEEFSTSL (125 aa). His-8 (tele-phosphohistidine intermediate) is an active-site residue. His-8 bears the Phosphohistidine; by HPr mark.

It is found in the cytoplasm. Functionally, the phosphoenolpyruvate-dependent sugar phosphotransferase system (PTS), a major carbohydrate active transport system, catalyzes the phosphorylation of incoming sugar substrates concomitant with their translocation across the cell membrane. The enzyme II SorABCD PTS system is involved in L-sorbose transport. This chain is PTS system sorbose-specific EIIA component, found in Lacticaseibacillus casei (Lactobacillus casei).